A 421-amino-acid polypeptide reads, in one-letter code: Tol-Pal system protein TolB (421 aa).

Residues M1–A16 form the signal peptide.

Belongs to the TolB family. In terms of assembly, the Tol-Pal system is composed of five core proteins: the inner membrane proteins TolA, TolQ and TolR, the periplasmic protein TolB and the outer membrane protein Pal. They form a network linking the inner and outer membranes and the peptidoglycan layer.

The protein localises to the periplasm. Its function is as follows. Part of the Tol-Pal system, which plays a role in outer membrane invagination during cell division and is important for maintaining outer membrane integrity. The polypeptide is Tol-Pal system protein TolB (Wolinella succinogenes (strain ATCC 29543 / DSM 1740 / CCUG 13145 / JCM 31913 / LMG 7466 / NCTC 11488 / FDC 602W) (Vibrio succinogenes)).